Here is a 233-residue protein sequence, read N- to C-terminus: Counting factor-associated protein A (233 aa).

A signal peptide spans 1 to 21; sequence MKLLNSLILLVLTCLVSSINT. 2 N-linked (GlcNAc...) asparagine glycosylation sites follow: Asn-37 and Asn-189.

The protein resides in the secreted. The chain is Counting factor-associated protein A (cfaA) from Dictyostelium discoideum (Social amoeba).